The chain runs to 95 residues: NLEPLKSHTVVGLDKSCDDGSSDDMSTGMRVLSGRGAFAKFGKPSAAQAQPQPPPPPLGMMHDTNQYQCTMDTIMQAYNPHRNAGGNTQFAYCFN.

2 disordered regions span residues 1–29 (NLEP…STGM) and 42–63 (GKPS…MMHD).

It belongs to the paired homeobox family. Bicoid subfamily.

The protein resides in the nucleus. In terms of biological role, bicoid is polarity protein that provides positional cues for the development of head and thoracic segments. BCD regulates the expression of zygotic genes, possibly through its homeodomain, and inhibits the activity of other maternal gene products. This chain is Homeotic protein bicoid (bcd), found in Drosophila subobscura (Fruit fly).